The primary structure comprises 197 residues: Xanthine phosphoribosyltransferase (197 aa).

2 residues coordinate xanthine: leucine 20 and asparagine 27. Alanine 128–alanine 132 lines the 5-phospho-alpha-D-ribose 1-diphosphate pocket. Lysine 156 is a binding site for xanthine.

It belongs to the purine/pyrimidine phosphoribosyltransferase family. Xpt subfamily. As to quaternary structure, homodimer.

Its subcellular location is the cytoplasm. The catalysed reaction is XMP + diphosphate = xanthine + 5-phospho-alpha-D-ribose 1-diphosphate. Its pathway is purine metabolism; XMP biosynthesis via salvage pathway; XMP from xanthine: step 1/1. In terms of biological role, converts the preformed base xanthine, a product of nucleic acid breakdown, to xanthosine 5'-monophosphate (XMP), so it can be reused for RNA or DNA synthesis. This is Xanthine phosphoribosyltransferase from Bacillus cytotoxicus (strain DSM 22905 / CIP 110041 / 391-98 / NVH 391-98).